A 693-amino-acid chain; its full sequence is Homoaconitase, mitochondrial (693 aa).

Residues 1–17 (MFRVQRLRMFSTSRALY) constitute a mitochondrion transit peptide. [4Fe-4S] cluster contacts are provided by cysteine 338, cysteine 405, and cysteine 408.

Belongs to the aconitase/IPM isomerase family. [4Fe-4S] cluster is required as a cofactor.

Its subcellular location is the mitochondrion. The enzyme catalyses (2R,3S)-homoisocitrate = cis-homoaconitate + H2O. It participates in amino-acid biosynthesis; L-lysine biosynthesis via AAA pathway; L-alpha-aminoadipate from 2-oxoglutarate: step 3/5. Catalyzes the reversible hydration of cis-homoaconitate to (2R,3S)-homoisocitrate, a step in the alpha-aminoadipate pathway for lysine biosynthesis. The chain is Homoaconitase, mitochondrial (LYS4) from Kluyveromyces lactis (strain ATCC 8585 / CBS 2359 / DSM 70799 / NBRC 1267 / NRRL Y-1140 / WM37) (Yeast).